Reading from the N-terminus, the 307-residue chain is MIAKSGSNQESNPMFQGVYTAIITPFKNDKIDYDSYFKLLEKQIKAGVSGVVPCGTTGESPTLSHSEHAELIRETVKAVQGKIQVVAGTGSNSTKEAIELTEAACKDGVDGILSVNPYYNKPTQEGLFQHFKSIAEHSTVPVMLYNIPGRTSVNLLPETVLRLSEVKQIRSMKEATGDLGQMGKLISLVGNKMTVLSGDDNLTLPLLAIGGVGVVSVISNLFPKALVQLVESFQQGKISEAKKIHYDFIEVFALAFMETNPIPIKAAMCWFGHCGPEIRLPLTPLSQNETSSKFKKVLEGLKEKGYE.

Thr57 lines the pyruvate pocket. Catalysis depends on Tyr145, which acts as the Proton donor/acceptor. The active-site Schiff-base intermediate with substrate is Lys173. Val215 provides a ligand contact to pyruvate.

This sequence belongs to the DapA family. Homotetramer; dimer of dimers.

It is found in the cytoplasm. The catalysed reaction is L-aspartate 4-semialdehyde + pyruvate = (2S,4S)-4-hydroxy-2,3,4,5-tetrahydrodipicolinate + H2O + H(+). Its pathway is amino-acid biosynthesis; L-lysine biosynthesis via DAP pathway; (S)-tetrahydrodipicolinate from L-aspartate: step 3/4. Its function is as follows. Catalyzes the condensation of (S)-aspartate-beta-semialdehyde [(S)-ASA] and pyruvate to 4-hydroxy-tetrahydrodipicolinate (HTPA). The polypeptide is 4-hydroxy-tetrahydrodipicolinate synthase (Leptospira interrogans serogroup Icterohaemorrhagiae serovar copenhageni (strain Fiocruz L1-130)).